Consider the following 293-residue polypeptide: Probable rRNA-processing protein EBP2 homolog (293 aa).

The segment covering 1 to 37 (MSLEEDIVSDDEMNMIDEDDATDSEAESLSDSDTENE) has biased composition (acidic residues). Disordered regions lie at residues 1 to 45 (MSLE…LAEP) and 150 to 293 (IEES…RQKR). Residues 135–190 (HMEKVKSRLLHEKKQIEESEERRKARDNKRMAKEVQSQKMKERAKEKKDNIESVKK) are a coiled coil. 3 stretches are compositionally biased toward basic and acidic residues: residues 150–167 (IEES…RMAK), 173–189 (KMKE…ESVK), and 247–256 (KKREFRDSKF). The span at 265–275 (SKQNTAETTND) shows a compositional bias: polar residues.

This sequence belongs to the EBP2 family. As to quaternary structure, interacts with NSN1.

Its subcellular location is the nucleus. The protein resides in the nucleolus. Its function is as follows. Required for the processing of the 27S pre-rRNA. Plays an important role in plant growth and senescence by modulating ribosome biogenesis in nucleolus. Associates with ribosomes. The protein is Probable rRNA-processing protein EBP2 homolog of Arabidopsis thaliana (Mouse-ear cress).